A 558-amino-acid polypeptide reads, in one-letter code: Xylulose kinase 2 (558 aa).

Residues D16, 20–23 (QSMK), S111, and D283 each bind substrate. ATP-binding positions include T305 and 456 to 460 (GASAN).

This sequence belongs to the FGGY kinase family. A divalent metal cation is required as a cofactor.

The protein localises to the cytoplasm. The catalysed reaction is D-xylulose + ATP = D-xylulose 5-phosphate + ADP + H(+). It participates in isoprenoid biosynthesis; carotenoid biosynthesis. With respect to regulation, repressed by oxo-clomazone (keto-clomazone), a bleaching herbicide. In terms of biological role, mediates 1-deoxy-D-xylulose (DX) phosphorylation in the cytoplasm prior to the translocation of 1-deoxy-D-xylulose 5-phosphate into plastids. Can also phosphorylate D-xylulose (Xyl). Uses preferentially ATP as cosubstrate. This Arabidopsis thaliana (Mouse-ear cress) protein is Xylulose kinase 2.